The following is a 306-amino-acid chain: Pseudouridine-5'-phosphate glycosidase (306 aa).

Residue Glu28 is the Proton donor of the active site. Positions 89 and 109 each coordinate substrate. Asp139 is a binding site for Mn(2+). Residue 141–143 (SAD) participates in substrate binding. Catalysis depends on Lys160, which acts as the Nucleophile.

The protein belongs to the pseudouridine-5'-phosphate glycosidase family. As to quaternary structure, homotrimer. Mn(2+) serves as cofactor.

The catalysed reaction is D-ribose 5-phosphate + uracil = psi-UMP + H2O. Catalyzes the reversible cleavage of pseudouridine 5'-phosphate (PsiMP) to ribose 5-phosphate and uracil. Functions biologically in the cleavage direction, as part of a pseudouridine degradation pathway. The polypeptide is Pseudouridine-5'-phosphate glycosidase (Gemmatimonas aurantiaca (strain DSM 14586 / JCM 11422 / NBRC 100505 / T-27)).